The sequence spans 270 residues: Urease accessory protein UreD (270 aa).

Belongs to the UreD family. In terms of assembly, ureD, UreF and UreG form a complex that acts as a GTP-hydrolysis-dependent molecular chaperone, activating the urease apoprotein by helping to assemble the nickel containing metallocenter of UreC. The UreE protein probably delivers the nickel.

It is found in the cytoplasm. Its function is as follows. Required for maturation of urease via the functional incorporation of the urease nickel metallocenter. The protein is Urease accessory protein UreD of Klebsiella pneumoniae.